Reading from the N-terminus, the 396-residue chain is Bone morphogenetic protein 2 (396 aa).

The signal sequence occupies residues methionine 1–glycine 23. Residues leucine 24–arginine 282 constitute a propeptide, cleaved by PCSK5. Serine 87 bears the Phosphoserine mark. 4 N-linked (GlcNAc...) asparagine glycosylation sites follow: asparagine 135, asparagine 163, asparagine 164, and asparagine 200. Residues lysine 272–lysine 293 are disordered. Residues histidine 274–lysine 293 are compositionally biased toward basic residues. 3 disulfide bridges follow: cysteine 296–cysteine 361, cysteine 325–cysteine 393, and cysteine 329–cysteine 395. An N-linked (GlcNAc...) asparagine glycan is attached at asparagine 338.

Belongs to the TGF-beta family. Homodimer; disulfide-linked. Interacts with SOSTDC1. Interacts with GREM2, RGMA, RGMB and RGMC. Interacts with ASPN. Interacts with MAFP5. Interacts with FBN1 (via N-terminal domain) and FBN2. Interacts with type I receptor BMPR1A. Interacts with type II receptor BMPR2. Interacts with ERFE. Interacts with BMPR1A/ALK3; the interaction may induce HAMP expression. Interacts with TGFBR3.

Its subcellular location is the secreted. Functionally, growth factor of the TGF-beta superfamily that plays essential roles in many developmental processes, including cardiogenesis, neurogenesis, and osteogenesis. Induces cartilage and bone formation. Initiates the canonical BMP signaling cascade by associating with type I receptor BMPR1A and type II receptor BMPR2. Once all three components are bound together in a complex at the cell surface, BMPR2 phosphorylates and activates BMPR1A. In turn, BMPR1A propagates signal by phosphorylating SMAD1/5/8 that travel to the nucleus and act as activators and repressors of transcription of target genes. Also acts to promote expression of HAMP, via the interaction with its receptor BMPR1A/ALK3. Can also signal through non-canonical pathways such as ERK/MAP kinase signaling cascade that regulates osteoblast differentiation. Also stimulates the differentiation of myoblasts into osteoblasts via the EIF2AK3-EIF2A-ATF4 pathway by stimulating EIF2A phosphorylation which leads to increased expression of ATF4 which plays a central role in osteoblast differentiation. Acts as a positive regulator of odontoblast differentiation during mesenchymal tooth germ formation, expression is repressed during the bell stage by MSX1-mediated inhibition of CTNNB1 signaling. This chain is Bone morphogenetic protein 2 (BMP2), found in Dama dama (Fallow deer).